We begin with the raw amino-acid sequence, 61 residues long: Sperm protamine P1 (61 aa).

The interval 1–61 (MARYRHSRSR…RRYHSHRRRY (61 aa)) is disordered.

The protein belongs to the protamine P1 family. Testis.

The protein resides in the nucleus. Its subcellular location is the chromosome. In terms of biological role, protamines substitute for histones in the chromatin of sperm during the haploid phase of spermatogenesis. They compact sperm DNA into a highly condensed, stable and inactive complex. This chain is Sperm protamine P1 (PRM1), found in Notoryctes typhlops (Southern marsupial mole).